Consider the following 929-residue polypeptide: Isoleucine--tRNA ligase (929 aa).

The 'HIGH' region motif lies at P58–H68. E563 contacts L-isoleucyl-5'-AMP. The 'KMSKS' region signature appears at K605 to S609. K608 is an ATP binding site. 4 residues coordinate Zn(2+): C892, C895, C912, and C915.

This sequence belongs to the class-I aminoacyl-tRNA synthetase family. IleS type 1 subfamily. In terms of assembly, monomer. Zn(2+) is required as a cofactor.

It localises to the cytoplasm. It catalyses the reaction tRNA(Ile) + L-isoleucine + ATP = L-isoleucyl-tRNA(Ile) + AMP + diphosphate. Functionally, catalyzes the attachment of isoleucine to tRNA(Ile). As IleRS can inadvertently accommodate and process structurally similar amino acids such as valine, to avoid such errors it has two additional distinct tRNA(Ile)-dependent editing activities. One activity is designated as 'pretransfer' editing and involves the hydrolysis of activated Val-AMP. The other activity is designated 'posttransfer' editing and involves deacylation of mischarged Val-tRNA(Ile). In Neisseria meningitidis serogroup A / serotype 4A (strain DSM 15465 / Z2491), this protein is Isoleucine--tRNA ligase.